The chain runs to 176 residues: uncharacterized protein (176 aa).

This is an uncharacterized protein from Dictyostelium discoideum (Social amoeba).